The chain runs to 263 residues: Proteasome subunit beta type-5 (263 aa).

A propeptide spans 1–59 (MALASVLERPLPVNQRGFFGLGGRADLLDLGPGSLSDGLSLAAPGWGVPEEPGIEMLHG) (removed in mature form). T60 functions as the Nucleophile in the catalytic mechanism. Position 108 (A108) interacts with bortezomib.

Belongs to the peptidase T1B family. As to quaternary structure, the 26S proteasome consists of a 20S proteasome core and two 19S regulatory subunits. The 20S proteasome core is a barrel-shaped complex made of 28 subunits that are arranged in four stacked rings. The two outer rings are each formed by seven alpha subunits, and the two inner rings are formed by seven beta subunits. The proteolytic activity is exerted by three beta-subunits PSMB5, PSMB6 and PSMB7. Directly interacts with POMP. Interacts with ABCB1 and TAP1. (Microbial infection) Interacts with HIV-1 TAT protein.

Its subcellular location is the cytoplasm. It is found in the nucleus. It catalyses the reaction Cleavage of peptide bonds with very broad specificity.. Its function is as follows. Component of the 20S core proteasome complex involved in the proteolytic degradation of most intracellular proteins. This complex plays numerous essential roles within the cell by associating with different regulatory particles. Associated with two 19S regulatory particles, forms the 26S proteasome and thus participates in the ATP-dependent degradation of ubiquitinated proteins. The 26S proteasome plays a key role in the maintenance of protein homeostasis by removing misfolded or damaged proteins that could impair cellular functions, and by removing proteins whose functions are no longer required. Associated with the PA200 or PA28, the 20S proteasome mediates ubiquitin-independent protein degradation. This type of proteolysis is required in several pathways including spermatogenesis (20S-PA200 complex) or generation of a subset of MHC class I-presented antigenic peptides (20S-PA28 complex). Within the 20S core complex, PSMB5 displays a chymotrypsin-like activity. This Homo sapiens (Human) protein is Proteasome subunit beta type-5.